Consider the following 196-residue polypeptide: ATP synthase subunit b (196 aa).

Residues proline 24–tryptophan 44 traverse the membrane as a helical segment.

The protein belongs to the ATPase B chain family. F-type ATPases have 2 components, F(1) - the catalytic core - and F(0) - the membrane proton channel. F(1) has five subunits: alpha(3), beta(3), gamma(1), delta(1), epsilon(1). F(0) has three main subunits: a(1), b(2) and c(10-14). The alpha and beta chains form an alternating ring which encloses part of the gamma chain. F(1) is attached to F(0) by a central stalk formed by the gamma and epsilon chains, while a peripheral stalk is formed by the delta and b chains.

It localises to the cell membrane. In terms of biological role, f(1)F(0) ATP synthase produces ATP from ADP in the presence of a proton or sodium gradient. F-type ATPases consist of two structural domains, F(1) containing the extramembraneous catalytic core and F(0) containing the membrane proton channel, linked together by a central stalk and a peripheral stalk. During catalysis, ATP synthesis in the catalytic domain of F(1) is coupled via a rotary mechanism of the central stalk subunits to proton translocation. Functionally, component of the F(0) channel, it forms part of the peripheral stalk, linking F(1) to F(0). In Frankia casuarinae (strain DSM 45818 / CECT 9043 / HFP020203 / CcI3), this protein is ATP synthase subunit b.